Consider the following 413-residue polypeptide: Protein trichome birefringence-like 31 (413 aa).

The helical; Signal-anchor for type II membrane protein transmembrane segment at 12–34 (IQSIFQVVLVSLLVLGSVRWILD) threads the bilayer. The GDS motif signature appears at 141-143 (GDS). The DCXHWCLPGXXDXWN motif signature appears at 384–398 (DCIHWCLPGVPDTWN).

This sequence belongs to the PC-esterase family. TBL subfamily.

It localises to the membrane. Functionally, may act as a bridging protein that binds pectin and other cell wall polysaccharides. Probably involved in maintaining esterification of pectins. May be involved in the specific O-acetylation of cell wall polymers. The protein is Protein trichome birefringence-like 31 (TBL31) of Arabidopsis thaliana (Mouse-ear cress).